Reading from the N-terminus, the 222-residue chain is Phosphoribosylformylglycinamidine synthase subunit PurQ (222 aa).

In terms of domain architecture, Glutamine amidotransferase type-1 spans 3–222; that stretch reads AAVVVFPGSN…RALTGALAAV (220 aa). Residue C86 is the Nucleophile of the active site. Residues H194 and E196 contribute to the active site.

Part of the FGAM synthase complex composed of 1 PurL, 1 PurQ and 2 PurS subunits.

The protein localises to the cytoplasm. It catalyses the reaction N(2)-formyl-N(1)-(5-phospho-beta-D-ribosyl)glycinamide + L-glutamine + ATP + H2O = 2-formamido-N(1)-(5-O-phospho-beta-D-ribosyl)acetamidine + L-glutamate + ADP + phosphate + H(+). The enzyme catalyses L-glutamine + H2O = L-glutamate + NH4(+). It functions in the pathway purine metabolism; IMP biosynthesis via de novo pathway; 5-amino-1-(5-phospho-D-ribosyl)imidazole from N(2)-formyl-N(1)-(5-phospho-D-ribosyl)glycinamide: step 1/2. Part of the phosphoribosylformylglycinamidine synthase complex involved in the purines biosynthetic pathway. Catalyzes the ATP-dependent conversion of formylglycinamide ribonucleotide (FGAR) and glutamine to yield formylglycinamidine ribonucleotide (FGAM) and glutamate. The FGAM synthase complex is composed of three subunits. PurQ produces an ammonia molecule by converting glutamine to glutamate. PurL transfers the ammonia molecule to FGAR to form FGAM in an ATP-dependent manner. PurS interacts with PurQ and PurL and is thought to assist in the transfer of the ammonia molecule from PurQ to PurL. In Roseobacter denitrificans (strain ATCC 33942 / OCh 114) (Erythrobacter sp. (strain OCh 114)), this protein is Phosphoribosylformylglycinamidine synthase subunit PurQ.